Here is a 229-residue protein sequence, read N- to C-terminus: QLHPLYLSGCPTTANCGSLGTPTNPALSCEHLKSVCADTASDFYYIESAGLYHKVFCEMDIEGGGWARYGRSNQGTTWNYVDEDAAEITLDIINASEVKEMTDLKYNRFLVQTDVVFKMKADDSVNPSRLTTRSLPWLEESPLFIPDYGNDHTRIEFPSGSVDRVTCIPGSSSKCGQGGGLPTANGLSKPFFFQSLFFSPRGTGASAHNDQWNRNKYTWDGSYYFVYAK.

Asn-94 is a glycosylation site (N-linked (GlcNAc...) asparagine).

The protein resides in the secreted. The sequence is that of Echinolectin 1 from Echinometra lucunter (Rock-boring urchin).